The sequence spans 394 residues: Envelope glycoprotein D (394 aa).

Residues 1–25 (MGGAAARLGAVILFVVIVGLHGVRS) form the signal peptide. Residues 26–57 (KYALVDASLKMADPNRFRGKDLPVLDQLTDPP) are interaction with TNFRSF14. The Virion surface segment spans residues 26–340 (KYALVDASLK…YHPPATPNNM (315 aa)). Histidine 64 serves as a coordination point for Zn(2+). Disulfide bonds link cysteine 91/cysteine 214, cysteine 131/cysteine 227, and cysteine 143/cysteine 152. N-linked (GlcNAc...) asparagine; by host glycosylation is found at asparagine 119 and asparagine 146. Aspartate 240 is a Zn(2+) binding site. Residues 261–305 (LKIAGWHGPKAPYTSTLLPPELSETPNATQPELAPEDPEDSALLE) are profusion. The interval 275–301 (STLLPPELSETPNATQPELAPEDPEDS) is disordered. An N-linked (GlcNAc...) asparagine; by host glycan is attached at asparagine 287. Residues 341-361 (GLIAGAVGGSLLAALVICGIV) form a helical membrane-spanning segment. Topologically, residues 362-394 (YWMRRHTQKAPKRIRLPHIREDDQPSSHQPLFY) are intravirion. The interval 375 to 394 (IRLPHIREDDQPSSHQPLFY) is disordered.

This sequence belongs to the herpesviridae glycoprotein D family. Homodimer. Interacts with host receptor TNFRSF14. Interacts with host receptor NECTIN1. Interacts (via profusion domain) with gB; this interaction occurs in the absence of gH/gL. Interacts (via profusion domain) with gH/gL heterodimer; this interaction occurs in the absence of gB. Associates with the gB-gH/gL-gD complex. Interacts (via C-terminus) with UL11 tegument protein. Interacts (via C-terminus) with VP22 tegument protein; this interaction has been demonstrated in other strains, but might be very weak since PubMed:19279114 has failed to see it. Interacts with host RSAD2.

Its subcellular location is the virion membrane. The protein localises to the host Golgi apparatus. In terms of biological role, envelope glycoprotein that binds to the host cell entry receptors NECTIN1, TNFRSF14/HVEM and 3-O-sulfated heparan sulfate, promoting the virus entry into host cells. May trigger fusion with host membrane, by recruiting the fusion machinery composed of gB and gH/gL. The chain is Envelope glycoprotein D (gD) from Homo sapiens (Human).